The sequence spans 394 residues: Succinate--CoA ligase [ADP-forming] subunit beta (394 aa).

ATP is bound by residues K46, 53-55 (GRG), E99, C102, and E107. Residues N199 and D213 each contribute to the Mg(2+) site. Substrate is bound by residues N264 and 321 to 323 (GIV).

This sequence belongs to the succinate/malate CoA ligase beta subunit family. In terms of assembly, heterotetramer of two alpha and two beta subunits. The cofactor is Mg(2+).

It catalyses the reaction succinate + ATP + CoA = succinyl-CoA + ADP + phosphate. The catalysed reaction is GTP + succinate + CoA = succinyl-CoA + GDP + phosphate. It participates in carbohydrate metabolism; tricarboxylic acid cycle; succinate from succinyl-CoA (ligase route): step 1/1. Succinyl-CoA synthetase functions in the citric acid cycle (TCA), coupling the hydrolysis of succinyl-CoA to the synthesis of either ATP or GTP and thus represents the only step of substrate-level phosphorylation in the TCA. The beta subunit provides nucleotide specificity of the enzyme and binds the substrate succinate, while the binding sites for coenzyme A and phosphate are found in the alpha subunit. This Haemophilus influenzae (strain PittGG) protein is Succinate--CoA ligase [ADP-forming] subunit beta.